A 278-amino-acid chain; its full sequence is Shikimate dehydrogenase (NADP(+)) (278 aa).

Residues 18–20 and threonine 65 contribute to the shikimate site; that span reads SRS. Catalysis depends on lysine 69, which acts as the Proton acceptor. NADP(+) is bound at residue glutamate 80. Residues asparagine 89 and aspartate 104 each coordinate shikimate. NADP(+) contacts are provided by residues 129–133 and leucine 218; that span reads GAGGS. Tyrosine 220 is a binding site for shikimate. Glycine 241 provides a ligand contact to NADP(+).

It belongs to the shikimate dehydrogenase family. Homodimer.

The enzyme catalyses shikimate + NADP(+) = 3-dehydroshikimate + NADPH + H(+). It functions in the pathway metabolic intermediate biosynthesis; chorismate biosynthesis; chorismate from D-erythrose 4-phosphate and phosphoenolpyruvate: step 4/7. Involved in the biosynthesis of the chorismate, which leads to the biosynthesis of aromatic amino acids. Catalyzes the reversible NADPH linked reduction of 3-dehydroshikimate (DHSA) to yield shikimate (SA). This chain is Shikimate dehydrogenase (NADP(+)), found in Rhodopseudomonas palustris (strain TIE-1).